Here is a 226-residue protein sequence, read N- to C-terminus: Ribonuclease 3 (226 aa).

The 123-residue stretch at 6-128 folds into the RNase III domain; the sequence is INRLQRKLGY…LIGGIFLDSD (123 aa). Glutamate 41 lines the Mg(2+) pocket. Aspartate 45 is a catalytic residue. Aspartate 114 and glutamate 117 together coordinate Mg(2+). The active site involves glutamate 117. Positions 155–225 constitute a DRBM domain; it reads DPKTRLQEFL…AEQALKKLEL (71 aa).

It belongs to the ribonuclease III family. Homodimer. Requires Mg(2+) as cofactor.

It localises to the cytoplasm. The enzyme catalyses Endonucleolytic cleavage to 5'-phosphomonoester.. Digests double-stranded RNA. Involved in the processing of primary rRNA transcript to yield the immediate precursors to the large and small rRNAs (23S and 16S). Processes some mRNAs, and tRNAs when they are encoded in the rRNA operon. Processes pre-crRNA and tracrRNA of type II CRISPR loci if present in the organism. The protein is Ribonuclease 3 of Pectobacterium carotovorum subsp. carotovorum (strain PC1).